The chain runs to 237 residues: Class B acid phosphatase (237 aa).

Positions 1–25 (MRKITLALSAACLLFSLNNAVVARA) are cleaved as a signal peptide. D69 (nucleophile) is an active-site residue. Positions 69 and 71 each coordinate Mg(2+). The Proton donor role is filled by D71. Residues 137–138 (TG) and K177 each bind substrate. D192 is a Mg(2+) binding site.

The protein belongs to the class B bacterial acid phosphatase family. In terms of assembly, homotetramer. Mg(2+) serves as cofactor.

It is found in the periplasm. It catalyses the reaction a phosphate monoester + H2O = an alcohol + phosphate. Its function is as follows. Dephosphorylates several organic phosphate monoesters. Also has a phosphotransferase activity catalyzing the transfer of low-energy phosphate groups from organic phosphate monoesters to free hydroxyl groups of various organic compounds. This Enterobacter sp. (strain 638) protein is Class B acid phosphatase.